A 205-amino-acid chain; its full sequence is Guanylyl cyclase-activating protein 1 (205 aa).

Residue Gly2 is the site of N-myristoyl glycine attachment. The residue at position 3 (Asn3) is a Deamidated asparagine. 4 consecutive EF-hand domains span residues 14-49 (SSTE…KNLS), 51-86 (WASQ…VLKG), 87-122 (KVEQ…IRAI), and 131-166 (TAEE…DQML). Ca(2+)-binding residues include Asp64, Asn66, Asp68, Tyr70, Glu75, Asp100, Asp102, Asn104, Cys106, Glu111, Asp144, Asn146, Asp148, Glu150, and Glu155. The disordered stretch occupies residues 185–205 (NGEQDEEGASGRETEAAEADG).

Homodimer. As to expression, detected in the retina. Detected in rod and cone photoreceptor cells (at protein level). Also present in certain pinealocytes.

The protein resides in the membrane. It localises to the photoreceptor inner segment. Its subcellular location is the cell projection. It is found in the cilium. The protein localises to the photoreceptor outer segment. Stimulates retinal guanylyl cyclase when free calcium ions concentration is low and inhibits guanylyl cyclase when free calcium ions concentration is elevated. This Ca(2+)-sensitive regulation of retinal guanylyl cyclase is a key event in recovery of the dark state of rod photoreceptors following light exposure. May be involved in cone photoreceptor light response and recovery of response in bright light. The protein is Guanylyl cyclase-activating protein 1 (GUCA1A) of Bos taurus (Bovine).